A 468-amino-acid polypeptide reads, in one-letter code: Argininosuccinate lyase (468 aa).

This sequence belongs to the lyase 1 family. Argininosuccinate lyase subfamily.

It is found in the cytoplasm. The catalysed reaction is 2-(N(omega)-L-arginino)succinate = fumarate + L-arginine. The protein operates within amino-acid biosynthesis; L-arginine biosynthesis; L-arginine from L-ornithine and carbamoyl phosphate: step 3/3. The polypeptide is Argininosuccinate lyase (Paraburkholderia xenovorans (strain LB400)).